The sequence spans 825 residues: Zygotic DNA replication licensing factor mcm6-B (825 aa).

Residues 159–186 form a C4-type zinc finger; sequence CLDCQTLVRDVEQQFKYTQPSICRNPVC. One can recognise an MCM domain in the interval 347–554; the sequence is LYHNLCTSLF…TDYAIARRIV (208 aa). Residue 397-404 coordinates ATP; the sequence is GDPSTAKS. An Arginine finger motif is present at residues 529–532; that stretch reads SRFD. A compositionally biased stretch (acidic residues) spans 668–679; it reads DQEDEHEVEEPQ. Residues 668 to 690 form a disordered region; that stretch reads DQEDEHEVEEPQEGINGDADVPN.

The protein belongs to the MCM family. Component of the mcm2-7 complex (RLF-M). The complex forms a toroidal hexameric ring with the proposed subunit order mcm2-mcm6-mcm4-mcm7-mcm3-mcm5 (By simililarity). Begins to associate with zmcm3, mcm4 and mcm7 into mcm complexes at the neurula stage.

The protein resides in the nucleus. It carries out the reaction ATP + H2O = ADP + phosphate + H(+). Acts as a component of the mcm2-7 complex (mcm complex) which is the putative replicative helicase essential for 'once per cell cycle' DNA replication initiation and elongation in eukaryotic cells. The active ATPase sites in the mcm2-7 ring are formed through the interaction surfaces of two neighboring subunits such that a critical structure of a conserved arginine finger motif is provided in trans relative to the ATP-binding site of the Walker A box of the adjacent subunit. The six ATPase active sites, however, are likely to contribute differentially to the complex helicase activity. The existence of maternal and zygotic forms of mcm3 and mcm6 suggests that specific forms of mcm2-7 complexes may be used during different stages of development. May replace mmcm6 in the mcm2-7 complex. The chain is Zygotic DNA replication licensing factor mcm6-B (zmcm6-b) from Xenopus laevis (African clawed frog).